The following is a 535-amino-acid chain: CTP synthase (535 aa).

Residues M1–L268 are amidoligase domain. S14 serves as a coordination point for CTP. A UTP-binding site is contributed by S14. An ATP-binding site is contributed by S15–I20. Y55 lines the L-glutamine pocket. D72 is an ATP binding site. Mg(2+) contacts are provided by D72 and E142. CTP contacts are provided by residues D149–E151, K189–Q194, and K225. Residues K189–Q194 and K225 contribute to the UTP site. ATP is bound at residue V243. The Glutamine amidotransferase type-1 domain maps to K293–K535. G355 lines the L-glutamine pocket. C382 serves as the catalytic Nucleophile; for glutamine hydrolysis. L-glutamine contacts are provided by residues L383–Q386, E406, and R464. Active-site residues include H509 and E511.

The protein belongs to the CTP synthase family. Homotetramer. In contrast to E.coli CTP synthase, remains a tetramer at dilute enzyme concentrations even in the absence of Mg(2+), ATP and UTP.

The catalysed reaction is UTP + L-glutamine + ATP + H2O = CTP + L-glutamate + ADP + phosphate + 2 H(+). It carries out the reaction L-glutamine + H2O = L-glutamate + NH4(+). It catalyses the reaction UTP + NH4(+) + ATP = CTP + ADP + phosphate + 2 H(+). The protein operates within pyrimidine metabolism; CTP biosynthesis via de novo pathway; CTP from UDP: step 2/2. Allosterically activated by GTP, when glutamine is the substrate. GTP has no effect on the reaction when ammonia is the substrate. The allosteric effector GTP functions by stabilizing the protein conformation that binds the tetrahedral intermediate(s) formed during glutamine hydrolysis. Also activated by magnesium. Allosterically inhibited by CTP. Its function is as follows. Catalyzes the ATP-dependent amination of UTP to CTP with either L-glutamine or ammonia as the source of nitrogen. Is essential for the synthesis of CTP de novo. Contrary to other bacterial CTP synthases, the lactococcal enzyme is also able to convert dUTP to dCTP, but this reaction may not play a significant physiological role. Regulates intracellular CTP levels through interactions with the four ribonucleotide triphosphates. The sequence is that of CTP synthase from Lactococcus lactis subsp. cremoris (strain MG1363).